The primary structure comprises 468 residues: 3-isopropylmalate dehydratase large subunit (468 aa).

3 residues coordinate [4Fe-4S] cluster: cysteine 347, cysteine 407, and cysteine 410.

Belongs to the aconitase/IPM isomerase family. LeuC type 1 subfamily. As to quaternary structure, heterodimer of LeuC and LeuD. The cofactor is [4Fe-4S] cluster.

The catalysed reaction is (2R,3S)-3-isopropylmalate = (2S)-2-isopropylmalate. The protein operates within amino-acid biosynthesis; L-leucine biosynthesis; L-leucine from 3-methyl-2-oxobutanoate: step 2/4. Functionally, catalyzes the isomerization between 2-isopropylmalate and 3-isopropylmalate, via the formation of 2-isopropylmaleate. The sequence is that of 3-isopropylmalate dehydratase large subunit from Prochlorococcus marinus (strain SARG / CCMP1375 / SS120).